We begin with the raw amino-acid sequence, 81 residues long: Photosystem I iron-sulfur center (81 aa).

4Fe-4S ferredoxin-type domains follow at residues 2-31 (AHSV…MIPW) and 39-68 (IASA…VRVY). Positions 11, 14, 17, 21, 48, 51, 54, and 58 each coordinate [4Fe-4S] cluster.

In terms of assembly, the eukaryotic PSI reaction center is composed of at least 11 subunits. It depends on [4Fe-4S] cluster as a cofactor.

It localises to the plastid. It is found in the chloroplast thylakoid membrane. It catalyses the reaction reduced [plastocyanin] + hnu + oxidized [2Fe-2S]-[ferredoxin] = oxidized [plastocyanin] + reduced [2Fe-2S]-[ferredoxin]. Apoprotein for the two 4Fe-4S centers FA and FB of photosystem I (PSI); essential for photochemical activity. FB is the terminal electron acceptor of PSI, donating electrons to ferredoxin. The C-terminus interacts with PsaA/B/D and helps assemble the protein into the PSI complex. Required for binding of PsaD and PsaE to PSI. PSI is a plastocyanin-ferredoxin oxidoreductase, converting photonic excitation into a charge separation, which transfers an electron from the donor P700 chlorophyll pair to the spectroscopically characterized acceptors A0, A1, FX, FA and FB in turn. This is Photosystem I iron-sulfur center from Adiantum capillus-veneris (Maidenhair fern).